A 524-amino-acid chain; its full sequence is Leucine-rich repeat-containing protein 1 (524 aa).

17 LRR repeats span residues 11–34 (NRHV…IYRY), 35–58 (ARSL…FFQL), 60–81 (KLRK…IANF), 83–105 (QLVE…SFCK), 107–126 (LQVA…SFPE), 127–149 (LQNL…NIGN), 150–172 (LYNL…SLTQ), 173–196 (LRRL…IGAL), 198–218 (HLKD…EIGN), 219–242 (LKNL…ISGL), 244–264 (SLTD…GIGK), 265–288 (LKKL…VGEC), 290–310 (SLTE…SIGK), 311–334 (LKKL…IGGC), 336–356 (SLTV…EVSQ), 357–380 (ATEL…LTAL), and 382–405 (LKAL…TDYT). Phosphothreonine is present on Thr-480. Residues 484-512 (GELKHMKKTVENLRNDMNAAKGLDSNKNE) adopt a coiled-coil conformation.

In terms of assembly, interacts with DLG1 and DLG4. May form a complex with DLG1 and ERBIN, where interaction between LRRC1 and ERBIN is indirect. Expressed strongly in testis and placenta, followed by heart, lung, kidney, thyroid, trachea, colon, prostate and pancreas.

Its subcellular location is the cytoplasm. It localises to the membrane. In Homo sapiens (Human), this protein is Leucine-rich repeat-containing protein 1 (LRRC1).